A 427-amino-acid polypeptide reads, in one-letter code: Galactose-3-O-sulfotransferase 3 (427 aa).

Topologically, residues 1–19 are cytoplasmic; that stretch reads MPPIFQRLQQATKMSRRKI. A helical; Signal-anchor for type II membrane protein membrane pass occupies residues 20–40; that stretch reads LLLVLGCSTLSLLIHQGAQLS. Residues 41–427 are Lumenal-facing; sequence WYPKLFPLSC…RPIRALRPGH (387 aa). N-linked (GlcNAc...) asparagine glycans are attached at residues N90, N109, N176, and N301. The interval 404 to 427 is disordered; it reads MRLRPEPVLDNPPPRPIRALRPGH.

This sequence belongs to the galactose-3-O-sulfotransferase family. Mg(2+) is required as a cofactor.

Its subcellular location is the golgi apparatus. It localises to the golgi stack membrane. It participates in protein modification; carbohydrate sulfation. In terms of biological role, transfers a sulfate to position 3 of non-reducing beta-galactosyl residues in N-glycans and core2-branched O-glycans. Has high activity towards Gal-beta-1,4-GlcNAc, Gal-beta-1,4(Fuc-alpha-1,3)GlcNAc and lower activity towards Gal-beta-1,3(Fuc-alpha-1,4)GlcNAc. This is Galactose-3-O-sulfotransferase 3 (GAL3ST3) from Bos taurus (Bovine).